Consider the following 675-residue polypeptide: NADH-ubiquinone oxidoreductase 75 kDa subunit (675 aa).

Residues 2 to 80 (KNISFKVNDF…SMNIYTNTLK (79 aa)) form the 2Fe-2S ferredoxin-type domain. [2Fe-2S] cluster contacts are provided by C36, C47, C50, and C64. The region spanning 80–119 (KVKKARESVLEFLLANHPLDCPICDQGGECDLQDQSVVFG) is the 4Fe-4S His(Cys)3-ligated-type domain. Positions 96, 100, 103, 109, 148, 151, 154, and 198 each coordinate [4Fe-4S] cluster. Positions 217-273 (LKSYNSIDVLDSLHSNIRVDIRGTKIMRILPRVNSELNEDWITDKIRFSYDSFRRQR) constitute a 4Fe-4S Mo/W bis-MGD-type domain.

It belongs to the complex I 75 kDa subunit family. In terms of assembly, complex I is composed of about 30 different subunits. Requires [2Fe-2S] cluster as cofactor. [4Fe-4S] cluster is required as a cofactor.

Its subcellular location is the mitochondrion inner membrane. The enzyme catalyses a ubiquinone + NADH + 5 H(+)(in) = a ubiquinol + NAD(+) + 4 H(+)(out). Core subunit of the mitochondrial membrane respiratory chain NADH dehydrogenase (Complex I) that is believed to belong to the minimal assembly required for catalysis. Complex I functions in the transfer of electrons from NADH to the respiratory chain. The immediate electron acceptor for the enzyme is believed to be ubiquinone. This is the largest subunit of complex I and it is a component of the iron-sulfur (IP) fragment of the enzyme. It may form part of the active site crevice where NADH is oxidized. The sequence is that of NADH-ubiquinone oxidoreductase 75 kDa subunit (NAD11) from Acanthamoeba castellanii (Amoeba).